Reading from the N-terminus, the 289-residue chain is uncharacterized protein (289 aa).

The next 9 helical transmembrane spans lie at 4-24, 44-64, 68-88, 106-126, 138-158, 166-186, 196-216, 230-250, and 258-278; these read NLLA…GTVV, LNAL…LAYF, VALG…SLMF, IFWA…GRPL, IPVL…AEYV, ILGL…KAAV, GLIL…GTIV, LPAM…LVLG, and WEWI…IALS.

The protein resides in the cell membrane. This is an uncharacterized protein from Corynebacterium glutamicum (strain ATCC 13032 / DSM 20300 / JCM 1318 / BCRC 11384 / CCUG 27702 / LMG 3730 / NBRC 12168 / NCIMB 10025 / NRRL B-2784 / 534).